Here is a 231-residue protein sequence, read N- to C-terminus: MSDYKELAWQGLWKNNPGLVQLLGLCPLLAVTATLTNALGLGLATMLVLIGSNILVSLVRDYVPKEIRIPVFVMIIAALVTSVQLFINAYAYGLYLSLGIFLPLIVTNCVIIGRAEAFASRNSVVKSTFDGLMMGLGFTLVLCVLGASREILGQGTLFYGADQLLGEWAKGLTIQIWQVDTTFLLAMLPPGAFIGMGLLIALKNVIDNYIEARQPKVELEAPARVRITKVN.

The next 6 helical transmembrane spans lie at 18-38, 39-59, 69-89, 93-113, 127-147, and 182-202; these read GLVQ…LTNA, LGLG…VSLV, IPVF…FINA, GLYL…VIIG, STFD…VLGA, and TFLL…LIAL.

It belongs to the NqrDE/RnfAE family. In terms of assembly, the complex is composed of six subunits: RnfA, RnfB, RnfC, RnfD, RnfE and RnfG.

The protein localises to the cell inner membrane. Its function is as follows. Part of a membrane-bound complex that couples electron transfer with translocation of ions across the membrane. In Shewanella piezotolerans (strain WP3 / JCM 13877), this protein is Ion-translocating oxidoreductase complex subunit E.